The following is a 301-amino-acid chain: UDP-3-O-acyl-N-acetylglucosamine deacetylase (301 aa).

3 residues coordinate Zn(2+): His-75, His-233, and Asp-237. Residue His-260 is the Proton donor of the active site.

It belongs to the LpxC family. The cofactor is Zn(2+).

It catalyses the reaction a UDP-3-O-[(3R)-3-hydroxyacyl]-N-acetyl-alpha-D-glucosamine + H2O = a UDP-3-O-[(3R)-3-hydroxyacyl]-alpha-D-glucosamine + acetate. Its pathway is glycolipid biosynthesis; lipid IV(A) biosynthesis; lipid IV(A) from (3R)-3-hydroxytetradecanoyl-[acyl-carrier-protein] and UDP-N-acetyl-alpha-D-glucosamine: step 2/6. Functionally, catalyzes the hydrolysis of UDP-3-O-myristoyl-N-acetylglucosamine to form UDP-3-O-myristoylglucosamine and acetate, the committed step in lipid A biosynthesis. This chain is UDP-3-O-acyl-N-acetylglucosamine deacetylase, found in Aliarcobacter butzleri (strain RM4018) (Arcobacter butzleri).